We begin with the raw amino-acid sequence, 1343 residues long: Vascular endothelial growth factor receptor 2 (1343 aa).

The first 19 residues, Met-1–Ala-19, serve as a signal peptide directing secretion. Topologically, residues Ala-20 to Glu-760 are extracellular. Asn-46, Asn-96, Asn-143, Asn-158, and Asn-245 each carry an N-linked (GlcNAc...) asparagine glycan. Ig-like C2-type domains are found at residues Asn-46 to Asp-109, Asn-141 to Glu-207, Tyr-224 to Thr-320, Pro-328 to Ser-414, Pro-421 to Ser-540, Pro-547 to Gln-654, and Pro-663 to Ile-749. Cys-53 and Cys-103 are joined by a disulfide. Residues Cys-150 and Cys-200 are joined by a disulfide bond. A disulfide bridge connects residues Cys-246 and Cys-307. Asn-318, Asn-374, Asn-395, Asn-507, Asn-576, Asn-609, Asn-615, Asn-627, Asn-671, Asn-700, and Asn-717 each carry an N-linked (GlcNAc...) asparagine glycan. Disulfide bonds link Cys-445–Cys-526 and Cys-567–Cys-638. Cys-684 and Cys-733 form a disulfide bridge. Residues Val-761–Leu-781 traverse the membrane as a helical segment. At Val-782–Val-1343 the chain is on the cytoplasmic side. Tyr-797 bears the Phosphotyrosine mark. In terms of domain architecture, Protein kinase spans Leu-830–Asn-1158. ATP is bound by residues Leu-836–Val-844 and Lys-864. Position 947 is a phosphotyrosine; by autocatalysis (Tyr-947). Residues Ser-978 and Ser-980 each carry the phosphoserine modification. A Phosphotyrosine; by autocatalysis modification is found at Tyr-992. A disulfide bridge links Cys-1020 with Cys-1041. The active-site Proton acceptor is the Asp-1024. Residues Tyr-1050, Tyr-1055, Tyr-1171, and Tyr-1210 each carry the phosphotyrosine; by autocatalysis modification. Ser-1227 and Ser-1231 each carry phosphoserine. Thr-1234 is subject to Phosphothreonine. The disordered stretch occupies residues Thr-1267–Val-1314. The segment covering Ser-1292–Tyr-1305 has biased composition (polar residues). A phosphotyrosine; by autocatalysis mark is found at Tyr-1301, Tyr-1305, and Tyr-1315.

The protein belongs to the protein kinase superfamily. Tyr protein kinase family. CSF-1/PDGF receptor subfamily. In terms of assembly, homodimer in the presence of bound dimeric VEGFA, VEGFC or VEGFD ligands; monomeric in the absence of bound ligands. Can also form heterodimers with FLT1/VEGFR1 and KDR/VEGFR2. Interacts (tyrosine phosphorylated) with LFYN, NCK1, PLCG1. Interacts (tyrosine-phosphorylated active form preferentially) with DAB2IP (via C2 domain and active form preferentially); the interaction occurs at the late phase of VEGFA response and inhibits KDR/VEGFR2 activity. Interacts with SHBSH2D2A/TSAD, GRB2, MYOF, CBL and PDCD6. Interacts (via C-terminus domain) with ERN1 (via kinase domain); the interaction is facilitated in a XBP1- and vascular endothelial growth factor (VEGF)-dependent manner in endothelial cells. Interacts (via juxtamembrane region) with chaperone PDCL3 (via thioredoxin fold region); the interaction leads to increased KDR/VEGFR2 abundance through inhibition of its ubiquitination and degradation. Interacts (tyrosine phosphorylated) with CCDC88A/GIV (via SH2-like region); binding requires autophosphorylation of the KDR/VEGFR2 C-terminal region. Interacts with isoform 2 of BSG. Interacts with SLC31A1; this interaction is induced upon VEGFA stimulation leading to SLC31A1 and KDR subsequent co-internalization to early endosomes, thereby activating KDR downstream signaling in endothelial cells. Post-translationally, N-glycosylated. In terms of processing, ubiquitinated. Tyrosine phosphorylation of the receptor promotes its poly-ubiquitination, leading to its degradation via the proteasome or lysosomal proteases. Autophosphorylated on tyrosine residues upon ligand binding. Autophosphorylation occurs in trans, i.e. one subunit of the dimeric receptor phosphorylates tyrosine residues on the other subunit. Phosphorylation at Tyr-947 is important for interaction with SH2D2A/TSAD and VEGFA-mediated reorganization of the actin cytoskeleton. Phosphorylation at Tyr-1171 is important for interaction with PLCG1 and SHB. Phosphorylation at Tyr-1210 is important for interaction with NCK1 and FYN. Dephosphorylated by PTPRB. Dephosphorylated by PTPRJ at Tyr-797, Tyr-947, Tyr-992, Tyr-1050, Tyr-1055, Tyr-1171 and Tyr-1210. Post-translationally, the inhibitory disulfide bond between Cys-1020 and Cys-1041 may serve as a specific molecular switch for H(2)S-induced modification that regulates KDR/VEGFR2 function. Expressed in the post-pubertal mammary glands.

It is found in the cell membrane. Its subcellular location is the cytoplasm. The protein localises to the nucleus. The protein resides in the cytoplasmic vesicle. It localises to the early endosome. It is found in the cell junction. Its subcellular location is the endoplasmic reticulum. It carries out the reaction L-tyrosyl-[protein] + ATP = O-phospho-L-tyrosyl-[protein] + ADP + H(+). Present in an inactive conformation in the absence of bound ligand. Binding of VEGFA, VEGFC or VEGFD leads to dimerization and activation by autophosphorylation on tyrosine residues. May be regulated by hydrogen sulfide (H(2)S) levels via a sensitive intracellular disulfide bond. Its function is as follows. Tyrosine-protein kinase that acts as a cell-surface receptor for VEGFA, VEGFC and VEGFD. Plays an essential role in the regulation of angiogenesis, vascular development, vascular permeability, and embryonic hematopoiesis. Promotes proliferation, survival, migration and differentiation of endothelial cells. Promotes reorganization of the actin cytoskeleton. Isoforms lacking a transmembrane domain may function as decoy receptors for VEGFA, VEGFC and/or VEGFD. Modulates FLT1 and FLT4 signaling by forming heterodimers. Binding of vascular growth factors to isoform 1 leads to the activation of several signaling cascades. Activation of PLCG1 leads to the production of the cellular signaling molecules diacylglycerol and inositol-1,4,5-trisphosphate and the activation of protein kinase C. Mediates activation of MAPK1/ERK2, MAPK3/ERK1 and the MAP kinase signaling pathway, as well as of the AKT1 signaling pathway. Mediates phosphorylation of PIK3R1, the regulatory subunit of phosphatidylinositol 3-kinase, reorganization of the actin cytoskeleton and activation of PTK2/FAK1. Required for VEGFA-mediated induction of NOS2 and NOS3, leading to the production of the signaling molecule nitric oxide (NO) by endothelial cells. Phosphorylates PLCG1. Promotes phosphorylation of FYN, NCK1, NOS3, PIK3R1, PTK2/FAK1 and SRC. This chain is Vascular endothelial growth factor receptor 2, found in Rattus norvegicus (Rat).